Here is a 140-residue protein sequence, read N- to C-terminus: L-fucose mutarotase (140 aa).

His22 (proton donor) is an active-site residue. Substrate contacts are provided by residues Asp30, Arg107, and 129–131; that span reads YGN.

The protein belongs to the RbsD / FucU family. FucU mutarotase subfamily. In terms of assembly, homodecamer.

The protein resides in the cytoplasm. It carries out the reaction alpha-L-fucose = beta-L-fucose. The protein operates within carbohydrate metabolism; L-fucose metabolism. Involved in the anomeric conversion of L-fucose. This is L-fucose mutarotase from Salmonella gallinarum (strain 287/91 / NCTC 13346).